The sequence spans 343 residues: Signal peptide peptidase 1 (343 aa).

Residues 1–19 lie on the Lumenal side of the membrane; sequence MKTHERAANLALAGLSLAP. Residues 20 to 40 traverse the membrane as a helical segment; it reads LVVKVEPNVNVILTACLAVYV. Residues 41–62 lie on the Cytoplasmic side of the membrane; sequence GCYRSVKPTPPSETMSKEHAMR. Residues 63-83 form a helical membrane-spanning segment; it reads FPLVGSAMLLSLFLLFKFLSK. Residues 84-87 lie on the Lumenal side of the membrane; that stretch reads DLVN. Residues 88-108 traverse the membrane as a helical segment; it reads AVLTAYFFILGIAALCATLLP. Over 109–136 the chain is Cytoplasmic; that stretch reads SIKRFLPKEWNDNAIVWCAPFFHSLSVE. The chain crosses the membrane as a helical span at residues 137-157; it reads FTKSQVVASIPGFFFCIWYAA. The Lumenal portion of the chain corresponds to 158–160; it reads KKH. Residues 161–181 form a helical membrane-spanning segment; it reads WLANNVLGISFCIQGIEMLSL. Residues 182–188 are Cytoplasmic-facing; sequence GSFKTGA. The helical transmembrane segment at 189 to 209 threads the bilayer; the sequence is ILLAGLFFYDIFWVFFTPVMV. D198 is an active-site residue. Residues 210-230 are Lumenal-facing; sequence SVAKSFDAPIKLLFPTGDAAR. A helical membrane pass occupies residues 231–251; sequence PFSMLGLGDIVIPGIFVALAL. D239 is an active-site residue. Topologically, residues 252–266 are cytoplasmic; the sequence is RFDVSRGIKNRYFNS. Residues 267–287 traverse the membrane as a helical segment; the sequence is AFLGYTVGLTVTIIVMNWFQA. Residues 288–290 are Lumenal-facing; sequence AQP. A PAL motif is present at residues 290-292; sequence PAL. The chain crosses the membrane as a helical span at residues 291-311; sequence ALLYIVPGVIGFVAVHCLWNG. Topologically, residues 312–343 are cytoplasmic; that stretch reads EVKPLLEYNESKAEEEDAVEEDTDSKQNKKEE. Positions 322 to 343 are disordered; that stretch reads SKAEEEDAVEEDTDSKQNKKEE. Over residues 324–334 the composition is skewed to acidic residues; sequence AEEEDAVEEDT. The Endoplasmic reticulum targeting signal signature appears at 340-343; it reads KKEE.

It belongs to the peptidase A22B family. Ubiquitous.

It localises to the endoplasmic reticulum membrane. In terms of biological role, intramembrane-cleaving aspartic protease (I-CLiP) that cleaves type II membrane signal peptides in the hydrophobic plane of the membrane. Catalyzes intramembrane proteolysis of some signal peptides after they have been cleaved from a preprotein, resulting in the release of the fragment from the ER membrane into the cytoplasm. This chain is Signal peptide peptidase 1 (SPP1), found in Oryza sativa subsp. japonica (Rice).